The sequence spans 337 residues: DNA-directed RNA polymerase subunit alpha (337 aa).

The tract at residues 1–233 (MVREEVVGST…DLFIPFLHAE (233 aa)) is alpha N-terminal domain (alpha-NTD). The segment at 265–337 (KEIALKCIFI…FAIDLPKNKF (73 aa)) is alpha C-terminal domain (alpha-CTD).

It belongs to the RNA polymerase alpha chain family. In terms of assembly, in plastids the minimal PEP RNA polymerase catalytic core is composed of four subunits: alpha, beta, beta', and beta''. When a (nuclear-encoded) sigma factor is associated with the core the holoenzyme is formed, which can initiate transcription.

Its subcellular location is the plastid. The protein localises to the chloroplast. It carries out the reaction RNA(n) + a ribonucleoside 5'-triphosphate = RNA(n+1) + diphosphate. In terms of biological role, DNA-dependent RNA polymerase catalyzes the transcription of DNA into RNA using the four ribonucleoside triphosphates as substrates. In Acorus calamus (Sweet flag), this protein is DNA-directed RNA polymerase subunit alpha.